A 385-amino-acid polypeptide reads, in one-letter code: m7GpppN-mRNA hydrolase (385 aa).

The Nudix hydrolase domain occupies 95–226; that stretch reads MGVPTYGAII…KLGLAPNKFF (132 aa). The Nudix box motif lies at 129-150; it reads GKVNKEEAPHDCAAREVFEETG. Residues E144 and E148 each contribute to the Mn(2+) site. Phosphoserine is present on residues S246, S247, S249, S276, and S284. A disordered region spans residues 247–266; sequence SDSDNGFSSTGSTPAKPTVE. Positions 249–259 are enriched in low complexity; that stretch reads SDNGFSSTGST.

The protein belongs to the Nudix hydrolase family. DCP2 subfamily. Found in a mRNA decay complex with LSM1, LSM3, LSM4, EXOSC2, EXOSC4, EXOSC10, PARN, XRN1, CNOT6, UPF1, UPF2 and UPF3B. Forms a complex with DCP1A, EDC3, DDX6 and EDC4/HEDLS, within this complex directly interacts with EDC4/HEDLS. Interacts with DPC1B, UPF1, UPF2 and UPF3B. Associates with polysomes. Interacts (via N-terminus and C-terminus) with TRIM21 (via N-terminus and C-terminus). Interacts with LIMD1, WTIP and AJUBA. Interacts with DDX17 in an RNA-dependent manner. Interacts with ZC3HAV1. Interacts with APOBEC3G in an RNA-dependent manner. Interacts with ZFP36L1 (via N-terminus). Interacts with NBDY. Mn(2+) serves as cofactor. The cofactor is Mg(2+).

The protein localises to the cytoplasm. Its subcellular location is the P-body. It localises to the nucleus. It carries out the reaction a 5'-end (N(7)-methyl 5'-triphosphoguanosine)-ribonucleoside in mRNA + H2O = N(7)-methyl-GDP + a 5'-end phospho-ribonucleoside in mRNA + 2 H(+). Functionally, decapping metalloenzyme that catalyzes the cleavage of the cap structure on mRNAs. Removes the 7-methyl guanine cap structure from mRNA molecules, yielding a 5'-phosphorylated mRNA fragment and 7m-GDP. Necessary for the degradation of mRNAs, both in normal mRNA turnover and in nonsense-mediated mRNA decay. Plays a role in replication-dependent histone mRNA degradation. Has higher activity towards mRNAs that lack a poly(A) tail. Has no activity towards a cap structure lacking an RNA moiety. The presence of a N(6)-methyladenosine methylation at the second transcribed position of mRNAs (N(6),2'-O-dimethyladenosine cap; m6A(m)) provides resistance to DCP2-mediated decapping. Blocks autophagy in nutrient-rich conditions by repressing the expression of ATG-related genes through degradation of their transcripts. This is m7GpppN-mRNA hydrolase (DCP2) from Pongo abelii (Sumatran orangutan).